The chain runs to 891 residues: von Willebrand factor A domain-containing protein 7 (891 aa).

The N-terminal stretch at M1–A28 is a signal peptide. N-linked (GlcNAc...) asparagine glycosylation occurs at N55. A disordered region spans residues P237–P272. The region spanning A313 to L506 is the VWFA domain.

Expressed at low level in different cell lines.

The protein localises to the secreted. In Homo sapiens (Human), this protein is von Willebrand factor A domain-containing protein 7 (VWA7).